A 351-amino-acid polypeptide reads, in one-letter code: Probable cobalt-factor III C(17)-methyltransferase (351 aa).

The protein belongs to the precorrin methyltransferase family.

It catalyses the reaction Co(II)-factor III + S-adenosyl-L-methionine + H(+) = Co(II)-factor IV + S-adenosyl-L-homocysteine. Its pathway is cofactor biosynthesis; adenosylcobalamin biosynthesis; cob(II)yrinate a,c-diamide from sirohydrochlorin (anaerobic route): step 3/10. Methyltransferase that likely catalyzes the ring contraction and methylation of C-17 in cobalt-factor III to form cobalt-factor IV. May also convert cobalt-precorrin-3 to cobalt-precorrin-4. The protein is Probable cobalt-factor III C(17)-methyltransferase (cbiH) of Methanothermobacter thermautotrophicus (strain ATCC 29096 / DSM 1053 / JCM 10044 / NBRC 100330 / Delta H) (Methanobacterium thermoautotrophicum).